Reading from the N-terminus, the 258-residue chain is 2-oxo-tetronate isomerase (258 aa).

Glu-143 functions as the Proton donor/acceptor in the catalytic mechanism. Mg(2+) is bound by residues Glu-143, Asp-178, Gln-204, and Glu-240. Catalysis depends on Glu-240, which acts as the Proton donor/acceptor.

The protein belongs to the hyi family. OtnI subfamily.

It carries out the reaction 2-dehydro-L-erythronate = 3-dehydro-L-erythronate. It catalyses the reaction 2-dehydro-D-erythronate = 3-dehydro-D-erythronate. Functionally, catalyzes the isomerization of 2-oxo-tetronate to 3-oxo-tetronate. The chain is 2-oxo-tetronate isomerase from Haemophilus influenzae (strain ATCC 51907 / DSM 11121 / KW20 / Rd).